A 311-amino-acid polypeptide reads, in one-letter code: Malate dehydrogenase (311 aa).

NAD(+) contacts are provided by residues 7 to 13 (GAAGGIG) and Asp34. 2 residues coordinate substrate: Arg81 and Arg87. Residues Asn94 and 117-119 (ITN) contribute to the NAD(+) site. 2 residues coordinate substrate: Asn119 and Arg153. Residue His177 is the Proton acceptor of the active site. Met227 provides a ligand contact to NAD(+).

Belongs to the LDH/MDH superfamily. MDH type 1 family. As to quaternary structure, homodimer.

It catalyses the reaction (S)-malate + NAD(+) = oxaloacetate + NADH + H(+). Functionally, catalyzes the reversible oxidation of malate to oxaloacetate. The protein is Malate dehydrogenase of Shewanella pealeana (strain ATCC 700345 / ANG-SQ1).